We begin with the raw amino-acid sequence, 78 residues long: Pigment-dispersing hormone 1 peptides (78 aa).

Positions 1-22 (MRSSVIVAVLVVVALAALLTQG) are cleaved as a signal peptide. Alanine 75 bears the Alanine amide mark.

It belongs to the arthropod PDH family. As to expression, eyestalk sinus gland.

Its subcellular location is the secreted. Its function is as follows. The pigment-dispersing hormone causes the migration of the distal retinal pigment into the proximal end of the pigment chromatophore cells and thus decreases the amount of light entering the retinulas. May also function as a neurotransmitter and/or neuromodulator. This is Pigment-dispersing hormone 1 peptides (PDH1) from Callinectes sapidus (Blue crab).